We begin with the raw amino-acid sequence, 286 residues long: Aquaporin NIP4-1 (286 aa).

2 consecutive transmembrane segments (helical) span residues 59–79 (VMVE…AALM) and 86–106 (LTFP…LSWL). Positions 112–114 (NPA) match the NPA 1 motif. 3 consecutive transmembrane segments (helical) span residues 133-153 (LYVA…NAVM), 173-193 (LPFL…ATVA), and 201-221 (TVGG…IGPV). Residues 227–229 (NPA) carry the NPA 2 motif. The helical transmembrane segment at 241–261 (YDGVWIYVVAPVAGMLVGALC) threads the bilayer.

It belongs to the MIP/aquaporin (TC 1.A.8) family. NIP (TC 1.A.8.12) subfamily. As to expression, expressed in leaves and at lower levels in roots.

It is found in the membrane. Functionally, aquaporins facilitate the transport of water and small neutral solutes across cell membranes. This Oryza sativa subsp. japonica (Rice) protein is Aquaporin NIP4-1 (NIP4-1).